The sequence spans 147 residues: D-aminoacyl-tRNA deacylase (147 aa).

The short motif at 136–137 is the Gly-cisPro motif, important for rejection of L-amino acids element; it reads GP.

Belongs to the DTD family. Homodimer.

Its subcellular location is the cytoplasm. The enzyme catalyses glycyl-tRNA(Ala) + H2O = tRNA(Ala) + glycine + H(+). It carries out the reaction a D-aminoacyl-tRNA + H2O = a tRNA + a D-alpha-amino acid + H(+). An aminoacyl-tRNA editing enzyme that deacylates mischarged D-aminoacyl-tRNAs. Also deacylates mischarged glycyl-tRNA(Ala), protecting cells against glycine mischarging by AlaRS. Acts via tRNA-based rather than protein-based catalysis; rejects L-amino acids rather than detecting D-amino acids in the active site. By recycling D-aminoacyl-tRNA to D-amino acids and free tRNA molecules, this enzyme counteracts the toxicity associated with the formation of D-aminoacyl-tRNA entities in vivo and helps enforce protein L-homochirality. This is D-aminoacyl-tRNA deacylase from Streptococcus equi subsp. equi (strain 4047).